Here is a 214-residue protein sequence, read N- to C-terminus: MKNLNIIDSVDVDAGADDPCVYLTFDDGPNPFCTPHILDVLAQHAVSATFFVIGANAEVHPGLVQRIVSEGHGVANHTMTHPDLATCSRPQVEREIDEANRAIISACPGASIRHIRAPYGKWTEEALVKSASLGLAPVHWSVDPRDWSCPGVDAIVDRVLAAAKPGSIVLLHEDGPPGAADPTKLPTLRDQTLAAISAIIKSLRSRGLTIRSLP.

One can recognise a NodB homology domain in the interval 19-211; that stretch reads PCVYLTFDDG…SLRSRGLTIR (193 aa). Asp-26 (proton acceptor) is an active-site residue. Positions 77 and 81 each coordinate a divalent metal cation. His-172 acts as the Proton donor in catalysis.

The protein belongs to the polysaccharide deacetylase family.

It localises to the cytoplasm. Functionally, is involved in generating a small heat-stable compound (Nod), an acylated oligomer of N-acetylglucosamine, that stimulates mitosis in various plant protoplasts. The polypeptide is Chitooligosaccharide deacetylase (nodB) (Neorhizobium galegae (Rhizobium galegae)).